The sequence spans 321 residues: MGTNVVRVFVILYLLAVCGCIEYDVDDNVHICTHTDVSHINHTSWYYNDKVIALATEDKTSGYISSFIKRVNISLTCLNISSLRYEDSGTYKGVSHLKDGVIVTTTMNISVKANIIDLTGRVRYLTRNYCEVKIRCEITSFALNGSTTPPHMILGTVDKWKYLPFPTDDYRYVGELKRYISGNPYPTESLALEISSTFNRFTIVKNLNDDEFSCYLFSQNYSFHKMLNARHICESEWKALNNNDNASSMPASHNNLANDLSSMMSQLQNDNDDNNDYSAPMNVDNLIMIVLITMLSIILVIIVVIAAISMYKKSKYRHIDN.

An N-terminal signal peptide occupies residues M1–C20. N41, N72, N79, N108, N144, N220, and N245 each carry an N-linked (GlcNAc...) asparagine; by host glycan. A helical membrane pass occupies residues L286 to A306.

This sequence belongs to the orthopoxvirus OPG049 family.

The protein resides in the host cell membrane. In terms of biological role, plays a role in the spread of virus to neighboring cells ex vivo. The protein is Protein OPG049 (OPG049) of Vaccinia virus (strain Copenhagen) (VACV).